The sequence spans 370 residues: D-alanine--D-alanine ligase (370 aa).

Residues 144–352 (KKIFADAGIP…YGALIERLVD (209 aa)) enclose the ATP-grasp domain. 177–232 (EEVLTYPVFVKPANLGSSVGISKATNKTELIEAMTEAFLYDRRVVVEQGVVAREIE) contributes to the ATP binding site. 3 residues coordinate Mg(2+): D306, E319, and N321.

The protein belongs to the D-alanine--D-alanine ligase family. Mg(2+) is required as a cofactor. It depends on Mn(2+) as a cofactor.

It localises to the cytoplasm. It carries out the reaction 2 D-alanine + ATP = D-alanyl-D-alanine + ADP + phosphate + H(+). It participates in cell wall biogenesis; peptidoglycan biosynthesis. Functionally, cell wall formation. In Listeria innocua serovar 6a (strain ATCC BAA-680 / CLIP 11262), this protein is D-alanine--D-alanine ligase.